A 723-amino-acid chain; its full sequence is MKKDTMLAGRVTIPTDVDVVPETMELLNRWGADAIRDCDGTDYPEELKAVQAKVYSTYYTTRKDNAWAKAHPEEVQQCYIMTSFYTATETTLRIPLLKGIAKELMMVNNYDDKVRWWEVIDRSTAMVVSTDTWSYDKETGEVIITNCEPFHNYTVSFLAYLIWDPVHMYNAVVNGWQGVEHQITFDVRQPKTREYSMVRLRKFIEEHPYVDVIRYTTFFHQFTLVFDEMMREKYVDWYGYSASVSPYILEQFEKEVGYRFRPEFIIDQGYYNNQYRIPSKEFKDFQAFQRREVAKLAKEMVDITHEYGKEAMMFLGDHWIGTEPFMEEFKTIGLDAVVGSVGNGSTLRLISDIPGVKYTEGRFLPYFFPDTFHEGGDPVKEAKVNWVTARRAILRKPIDRIGYGGYLKLACQFPEFIDYVESVCNEFRELYENIKGTTPFCIKRVAVLNSWGKMRAWGAHMVHHALYQKQNYSYAGVIESLSGTPFEVSFISFDDIKKDKNILKNIDVIINVGDGDTAHTGGLVWEDADISSAIHQFVYEGGGLIGIGEPTGHQYQGRYIQLANVFGIEKETGFTLNYDKYNWDAVESHFITEDCTKEVDFGEGKKNMYALEGTTILVQMEKEVQMAVNEFGKGRSVYLSGLPYSFENSRVLYRSILWSAHEEENLHKWYSSNFNVEVHAYVKNNKYCVVNNTYEPQNTTIYRGDSSSFDLELEANEIIWYEI.

D317 (proton donor) is an active-site residue.

It belongs to the glycoside hydrolase 112 family.

It carries out the reaction beta-D-galactosyl-(1-&gt;3)-N-acetyl-D-glucosamine + phosphate = alpha-D-galactose 1-phosphate + N-acetyl-D-glucosamine. Functionally, reversibly phosphorolyzes beta-D-galactopyranosyl-(1-&gt;3)-N-acetyl-D-glucosamine to form alpha-D-galactopyranose 1-phosphate and acetyl-D-glucosamine. Active towards galacto-N-biose and lacto-N-biose. Does not phosphorolyze galacto-N-tetraose or lacto-N-tetraose. In the reverse reaction has activity toward N-acetyl-D-glucosamine and N-acetyl-D-galactosamine, but not L-rhamnose, D-glucose or D-galactose. The chain is 1,3-beta-galactosyl-N-acetylhexosamine phosphorylase Cphy0577 from Lachnoclostridium phytofermentans (strain ATCC 700394 / DSM 18823 / ISDg) (Clostridium phytofermentans).